The following is a 375-amino-acid chain: Protein RecA (375 aa).

Residue 88 to 95 (GPESSGKT) participates in ATP binding.

Belongs to the RecA family.

The protein localises to the cytoplasm. Functionally, can catalyze the hydrolysis of ATP in the presence of single-stranded DNA, the ATP-dependent uptake of single-stranded DNA by duplex DNA, and the ATP-dependent hybridization of homologous single-stranded DNAs. It interacts with LexA causing its activation and leading to its autocatalytic cleavage. This Rhodopirellula baltica (strain DSM 10527 / NCIMB 13988 / SH1) protein is Protein RecA.